We begin with the raw amino-acid sequence, 309 residues long: Taste receptor type 2 member 8 (309 aa).

The Extracellular segment spans residues 1-7 (MFSPADN). A helical transmembrane segment spans residues 8 to 28 (IFIILITGEFILGILGNGYIA). Over 29–50 (LVNWIDWIKKKKISTTDYILTN) the chain is Cytoplasmic. Residues 51 to 71 (LVISRICLISVIVVNGIVTVL) traverse the membrane as a helical segment. The Extracellular portion of the chain corresponds to 72–82 (YPDVYTKSKLQ). A helical transmembrane segment spans residues 83–103 (IAISTFWTFANYLNMWFTTCL). The Cytoplasmic portion of the chain corresponds to 104–131 (NVFYFLKIANSSHPLFLWLKQKIDMVVR). Residues 132–152 (WILLGCFAISLLVSLIIAIVL) form a helical membrane-spanning segment. Residues 153-184 (SRDYRFHAIAKHKRNITEMFHVSKMLYFEPLT) lie on the Extracellular side of the membrane. N-linked (GlcNAc...) asparagine glycosylation occurs at N167. The chain crosses the membrane as a helical span at residues 185–205 (LFNLLAIVPFIVSLMSFFLLV). Over 206 to 239 (RSLQRHTKQIKLYATGGRDPSTEAHVRAIKTMTS) the chain is Cytoplasmic. A helical transmembrane segment spans residues 240 to 260 (FIFFFFLYYITSLLVTFSYLM). The Extracellular segment spans residues 261–266 (TKYKLA). A helical membrane pass occupies residues 267-287 (MAFGEIVAILYPSGHSFILII). Residues 288–309 (LNNKLRQASVRMLTCIKITCVI) are Cytoplasmic-facing.

The protein belongs to the G-protein coupled receptor T2R family.

Its subcellular location is the membrane. Receptor that may play a role in the perception of bitterness and is gustducin-linked. May play a role in sensing the chemical composition of the gastrointestinal content. The activity of this receptor may stimulate alpha gustducin, mediate PLC-beta-2 activation and lead to the gating of TRPM5. The polypeptide is Taste receptor type 2 member 8 (TAS2R8) (Pongo pygmaeus (Bornean orangutan)).